The following is a 428-amino-acid chain: Glutamate-1-semialdehyde 2,1-aminomutase 1 (428 aa).

Residue K267 is modified to N6-(pyridoxal phosphate)lysine.

Belongs to the class-III pyridoxal-phosphate-dependent aminotransferase family. HemL subfamily. In terms of assembly, homodimer. It depends on pyridoxal 5'-phosphate as a cofactor.

The protein resides in the cytoplasm. The catalysed reaction is (S)-4-amino-5-oxopentanoate = 5-aminolevulinate. It participates in porphyrin-containing compound metabolism; protoporphyrin-IX biosynthesis; 5-aminolevulinate from L-glutamyl-tRNA(Glu): step 2/2. The sequence is that of Glutamate-1-semialdehyde 2,1-aminomutase 1 from Staphylococcus aureus (strain MW2).